A 234-amino-acid chain; its full sequence is Large ribosomal subunit protein uL1 (234 aa).

It belongs to the universal ribosomal protein uL1 family. As to quaternary structure, part of the 50S ribosomal subunit.

In terms of biological role, binds directly to 23S rRNA. The L1 stalk is quite mobile in the ribosome, and is involved in E site tRNA release. Its function is as follows. Protein L1 is also a translational repressor protein, it controls the translation of the L11 operon by binding to its mRNA. This is Large ribosomal subunit protein uL1 from Serratia proteamaculans (strain 568).